The following is a 156-amino-acid chain: Large ribosomal subunit protein uL15 (156 aa).

Positions 26 to 46 (GIGCGKGKTSGRGHKGQKARS) are disordered. Residues 34-43 (TSGRGHKGQK) are compositionally biased toward basic residues.

This sequence belongs to the universal ribosomal protein uL15 family. Part of the 50S ribosomal subunit.

In terms of biological role, binds to the 23S rRNA. This is Large ribosomal subunit protein uL15 from Ehrlichia canis (strain Jake).